Reading from the N-terminus, the 868-residue chain is MESSFGLLLALLTLTIIHIVQAQDPQGFISLDCGLPANETSPYTETQTGLLFSSDATFIQSGKTGRVQANQESKFLKPYRTLRYFPEGVRNCYNLSVFKERKYLIAASFLYGNYDGHNIAPVFDLYLGPNLWAKIDLQDVNGTGEEILHIPTSNSLQICLVQTGETTPLISSLELRPMRTGSYTTVSGSLKTYRRLYFKKSGSRLRYSKDVYDRSWFPRFMDEWTQISTALGVINTNIYQPPEDALKNAATPTDASAPLTFKWNSEKLDVQYYFYAHYAEIQDLQANDTREFNILLNGQNLSVTGPEVPDKLSIKTFQSSSPISCNGWACNFQLIRTKRSTLPPLLNALEVYTVIQFPRSETDESDVVAMKNISASYGLSRINWQGDPCFPQQLRWDALDCTNRNISQPPRITSLNLSSSRLNGTIAAAIQSITQLETLDLSYNNLTGEVPEFLGKMKSLSVINLSGNNLNGSIPQALRKKRLKLYLEGNPRLIKPPKKEFPVAIVTLVVFVTVIVVLFLVFRKKMSTIVKGLRLPPRTSMVDVTFSNKKSKRFTYSEVVQVTKNFQRVLGKGGFGMVYHGTVKGSEQVAVKVLSQSSTQGSKEFKAEVDLLLRVHHTNLVSLVGYCCEGDYLALVYEFLPNGDLKQHLSGKGGNSIINWSIRLRIALEAALGLEYLHIGCTPPMVHRDVKTANILLDENFKAKLADFGLSRSFQGEGESQESTTIAGTLGYLDPECYHSGRLGEKSDVYSFGIVLLEMITNQPVINQTSGDSHITQWVGFQMNRGDILEIMDPNLRKDYNINSAWRALELAMSCAYPSSSKRPSMSQVIHELKECIACENTGISKNRSLEYQEMNVSLDTTAVPMAR.

The signal sequence occupies residues 1 to 22 (MESSFGLLLALLTLTIIHIVQA). The Extracellular segment spans residues 23 to 500 (QDPQGFISLD…PRLIKPPKKE (478 aa)). Residues asparagine 38, asparagine 94, asparagine 141, asparagine 287, asparagine 300, asparagine 372, asparagine 405, asparagine 416, asparagine 423, asparagine 445, asparagine 464, and asparagine 471 are each glycosylated (N-linked (GlcNAc...) asparagine). LRR repeat units follow at residues 409–432 (PPRI…AIQS), 433–459 (ITQL…KMKS), and 461–481 (SVIN…LRKK). The chain crosses the membrane as a helical span at residues 501–521 (FPVAIVTLVVFVTVIVVLFLV). The Cytoplasmic segment spans residues 522–868 (FRKKMSTIVK…LDTTAVPMAR (347 aa)). Threonine 555 bears the Phosphothreonine mark. The 271-residue stretch at 564–834 (KNFQRVLGKG…SMSQVIHELK (271 aa)) folds into the Protein kinase domain. Residues 570-578 (LGKGGFGMV) and lysine 592 each bind ATP. At tyrosine 637 the chain carries Phosphotyrosine. The active-site Proton acceptor is aspartate 689. A Phosphoserine modification is found at serine 723. A phosphothreonine mark is found at threonine 724 and threonine 729.

Belongs to the protein kinase superfamily. Ser/Thr protein kinase family. In terms of processing, autophosphorylated on Tyr and Thr residues.

Its subcellular location is the cell membrane. It catalyses the reaction L-seryl-[protein] + ATP = O-phospho-L-seryl-[protein] + ADP + H(+). It carries out the reaction L-threonyl-[protein] + ATP = O-phospho-L-threonyl-[protein] + ADP + H(+). The catalysed reaction is L-tyrosyl-[protein] + ATP = O-phospho-L-tyrosyl-[protein] + ADP + H(+). In terms of biological role, probable receptor with a dual specificity kinase activity acting on both serine/threonine- and tyrosine-containing substrates. In Arabidopsis thaliana (Mouse-ear cress), this protein is Receptor-like protein kinase At5g59670.